A 251-amino-acid chain; its full sequence is CDP-diacylglycerol pyrophosphatase (251 aa).

Residues 4 to 24 (AGLLFLVMIVIAVVATGIGYW) form a helical membrane-spanning segment.

It belongs to the Cdh family.

It localises to the cell inner membrane. It carries out the reaction a CDP-1,2-diacyl-sn-glycerol + H2O = a 1,2-diacyl-sn-glycero-3-phosphate + CMP + 2 H(+). It functions in the pathway phospholipid metabolism; CDP-diacylglycerol degradation; phosphatidate from CDP-diacylglycerol: step 1/1. This Escherichia coli O45:K1 (strain S88 / ExPEC) protein is CDP-diacylglycerol pyrophosphatase.